Consider the following 380-residue polypeptide: Tryptophan 2,3-dioxygenase (380 aa).

Substrate contacts are provided by residues phenylalanine 57–histidine 61 and arginine 128. A heme-binding site is contributed by histidine 313. Substrate is bound at residue threonine 328.

This sequence belongs to the tryptophan 2,3-dioxygenase family. As to quaternary structure, homotetramer. Dimer of dimers. Heme serves as cofactor.

The catalysed reaction is L-tryptophan + O2 = N-formyl-L-kynurenine. Its pathway is amino-acid degradation; L-tryptophan degradation via kynurenine pathway; L-kynurenine from L-tryptophan: step 1/2. It functions in the pathway pigment biosynthesis; ommochrome biosynthesis. Functionally, heme-dependent dioxygenase that catalyzes the oxidative cleavage of the L-tryptophan (L-Trp) pyrrole ring and converts L-tryptophan to N-formyl-L-kynurenine. Catalyzes the oxidative cleavage of the indole moiety. This Drosophila persimilis (Fruit fly) protein is Tryptophan 2,3-dioxygenase.